Consider the following 76-residue polypeptide: Waprin-Rha1 (76 aa).

The N-terminal stretch at 1–24 (MQARVFLLLLGVILLGMMGPMVSA) is a signal peptide. The region spanning 25–75 (QDGKAGSCPDVNQPIPPLGVCKTTCATDSNCPDIQKCCKNGCGHMSCTRPS) is the WAP domain. 4 disulfides stabilise this stretch: Cys32–Cys62, Cys45–Cys66, Cys49–Cys61, and Cys55–Cys71.

The protein belongs to the venom waprin family. In terms of tissue distribution, expressed by the venom gland.

Its subcellular location is the secreted. Functionally, damages membranes of susceptible bacteria. Has no hemolytic activity. Not toxic to mice. Does not inhibit the proteinases elastase and cathepsin G. The protein is Waprin-Rha1 of Rhabdophis tigrinus tigrinus (Tiger keelback snake).